Here is a 306-residue protein sequence, read N- to C-terminus: Arylesterase (306 aa).

An Involved in the stabilization of the negatively charged intermediate by the formation of the oxyanion hole motif is present at residues 82–84; it reads HGG. Catalysis depends on residues Ser156, Asp251, and His281.

As to quaternary structure, monomer.

The catalysed reaction is a phenyl acetate + H2O = a phenol + acetate + H(+). The enzyme catalyses An aryl dialkyl phosphate + H2O = dialkyl phosphate + an aryl alcohol.. Completely inhibited by chemical modifiers that are specific to Cys (HgCl(2) and p-chloromercuribenzoic acid), His (diethyl pyrocarbonate) and Ser (diisopropyl fluorophosphate and phenylmethanesulfonyl fluoride). No significant effect with chemical modifiers specific to Lys (pyridoxal 5'-phosphate) and Arg (phenylglyoxal). Not inhibited by inhibitors of A-esterases (paraoxon) or C-esterases (physostigmine/eserine). Activity is also not effected by incubation with 5 mM divalent cations for 30 minutes at 30 degrees Celsius or with 10 mM EDTA for 60 minutes at 75 degrees Celsius. Has a broad substrate specificity. Hydrolyzes various p-nitrophenyl phosphates, aromatic esters and p-nitrophenyl fatty acids in vitro. Most active against paraoxon, phenyl acetate and p-nitrophenyl caproate (C6), respectively. Also has tributyrinase activity, but shows no hydrolytic activity toward other triacylglycerols including tricaprylin, trimyristin, tripalmitin or triolein in vitro. The polypeptide is Arylesterase (Saccharolobus solfataricus (Sulfolobus solfataricus)).